Reading from the N-terminus, the 69-residue chain is MTKPADIRVKSADELGALLIDLRKEQFNLRFQQATGQLEKTGRAVQVRRDIARVKTILAERQRAAAPKA.

This sequence belongs to the universal ribosomal protein uL29 family.

This is Large ribosomal subunit protein uL29 from Granulibacter bethesdensis (strain ATCC BAA-1260 / CGDNIH1).